The chain runs to 232 residues: U-scoloptoxin(11)-Ssd2a (232 aa).

The signal sequence occupies residues Met1–Gly21. A propeptide spanning residues Lys22–Arg32 is cleaved from the precursor.

In terms of processing, contains 8 disulfide bonds. In terms of tissue distribution, expressed by the venom gland.

Its subcellular location is the secreted. This Scolopendra dehaani (Thai centipede) protein is U-scoloptoxin(11)-Ssd2a.